A 385-amino-acid polypeptide reads, in one-letter code: tRNA-specific 2-thiouridylase MnmA (385 aa).

ATP-binding positions include 30 to 37 (GMSGGVDS) and Met-56. Residues 118 to 120 (NPD) form an interaction with target base in tRNA region. The Nucleophile role is filled by Cys-123. An intrachain disulfide couples Cys-123 to Cys-220. An ATP-binding site is contributed by Gly-148. Positions 170–172 (KDQ) are interaction with tRNA. Residue Cys-220 is the Cysteine persulfide intermediate of the active site. Residues 332 to 333 (RY) are interaction with tRNA.

It belongs to the MnmA/TRMU family.

Its subcellular location is the cytoplasm. The catalysed reaction is S-sulfanyl-L-cysteinyl-[protein] + uridine(34) in tRNA + AH2 + ATP = 2-thiouridine(34) in tRNA + L-cysteinyl-[protein] + A + AMP + diphosphate + H(+). Catalyzes the 2-thiolation of uridine at the wobble position (U34) of tRNA, leading to the formation of s(2)U34. The sequence is that of tRNA-specific 2-thiouridylase MnmA from Haemophilus influenzae (strain PittGG).